The sequence spans 698 residues: UvrABC system protein B (698 aa).

Positions 25–183 (NGLNSGLVHQ…TLIDLQFERN (159 aa)) constitute a Helicase ATP-binding domain. Residue 38–45 (GATGTGKT) coordinates ATP. A Beta-hairpin motif is present at residues 91 to 114 (YYDAYTPEAYVPSKDLYIEKEAQI). One can recognise a Helicase C-terminal domain in the interval 428–594 (QIDDLLGEIK…GIVKAVRDLT (167 aa)). The region spanning 622-657 (FKVINALEKQMKQAAKDLEFEKAALLRDQLTEMRQT) is the UVR domain.

Belongs to the UvrB family. Forms a heterotetramer with UvrA during the search for lesions. Interacts with UvrC in an incision complex.

The protein localises to the cytoplasm. Its function is as follows. The UvrABC repair system catalyzes the recognition and processing of DNA lesions. A damage recognition complex composed of 2 UvrA and 2 UvrB subunits scans DNA for abnormalities. Upon binding of the UvrA(2)B(2) complex to a putative damaged site, the DNA wraps around one UvrB monomer. DNA wrap is dependent on ATP binding by UvrB and probably causes local melting of the DNA helix, facilitating insertion of UvrB beta-hairpin between the DNA strands. Then UvrB probes one DNA strand for the presence of a lesion. If a lesion is found the UvrA subunits dissociate and the UvrB-DNA preincision complex is formed. This complex is subsequently bound by UvrC and the second UvrB is released. If no lesion is found, the DNA wraps around the other UvrB subunit that will check the other stand for damage. This is UvrABC system protein B from Herpetosiphon aurantiacus (strain ATCC 23779 / DSM 785 / 114-95).